The primary structure comprises 152 residues: Superoxide dismutase [Cu-Zn] 4A (152 aa).

Residues His45, His47, and His62 each coordinate Cu cation. The cysteines at positions 56 and 145 are disulfide-linked. Residues His62, His70, His79, and Asp82 each coordinate Zn(2+). His119 is a Cu cation binding site.

This sequence belongs to the Cu-Zn superoxide dismutase family. Homodimer. The cofactor is Cu cation. Requires Zn(2+) as cofactor.

The protein resides in the cytoplasm. It catalyses the reaction 2 superoxide + 2 H(+) = H2O2 + O2. Its function is as follows. Destroys radicals which are normally produced within the cells and which are toxic to biological systems. This Zea mays (Maize) protein is Superoxide dismutase [Cu-Zn] 4A (SODCC.3).